A 133-amino-acid chain; its full sequence is Interferon alpha-inducible protein 27-like protein 2 (133 aa).

A run of 3 helical transmembrane segments spans residues 8 to 28 (AAIG…AVGF), 51 to 71 (GGGV…AAGL), and 73 to 93 (TSSN…LGGA). The tract at residues 93–133 (AKRASPSPPPGGPRPEGEQPGENVPQVEPPKSPLGPEKHEK) is disordered.

This sequence belongs to the IFI6/IFI27 family.

The protein resides in the mitochondrion membrane. In terms of biological role, plays a role in the apoptotic process and has a pro-apoptotic activity. This is Interferon alpha-inducible protein 27-like protein 2 from Bos taurus (Bovine).